The following is a 558-amino-acid chain: 2-isopropylmalate synthase (558 aa).

The region spanning 30-303 (PIWCSVDLRD…DPGIDCSDIN (274 aa)) is the Pyruvate carboxyltransferase domain. Aspartate 39, histidine 242, histidine 244, and asparagine 278 together coordinate Mg(2+). Residues 437 to 558 (QPGARLKFLD…ANRIVGRKAR (122 aa)) are regulatory domain.

This sequence belongs to the alpha-IPM synthase/homocitrate synthase family. LeuA type 2 subfamily. As to quaternary structure, homodimer. Mg(2+) is required as a cofactor.

It localises to the cytoplasm. The catalysed reaction is 3-methyl-2-oxobutanoate + acetyl-CoA + H2O = (2S)-2-isopropylmalate + CoA + H(+). It functions in the pathway amino-acid biosynthesis; L-leucine biosynthesis; L-leucine from 3-methyl-2-oxobutanoate: step 1/4. Its function is as follows. Catalyzes the condensation of the acetyl group of acetyl-CoA with 3-methyl-2-oxobutanoate (2-ketoisovalerate) to form 3-carboxy-3-hydroxy-4-methylpentanoate (2-isopropylmalate). The chain is 2-isopropylmalate synthase from Mesorhizobium japonicum (strain LMG 29417 / CECT 9101 / MAFF 303099) (Mesorhizobium loti (strain MAFF 303099)).